The primary structure comprises 454 residues: Macrophage scavenger receptor types I and II (454 aa).

The disordered stretch occupies residues 1–22; it reads MAQWDSFTDQQEDTDSCSESVK. Topologically, residues 1–50 are cytoplasmic; sequence MAQWDSFTDQQEDTDSCSESVKFDARSNTALLPPNPKNGPPLQEKLKSFK. The residue at position 27 (Ser-27) is a Phosphoserine. Residues 51–73 traverse the membrane as a helical; Signal-anchor for type II membrane protein segment; sequence AALIALYLLVFAVLIPIIAIMAA. The segment at 74–109 is spacer; the sequence is QLLKWEMKNCTVGSINANSVSSSLLGRGNDSEHEVR. The Extracellular segment spans residues 74 to 454; that stretch reads QLLKWEMKNC…GEDAGVTCTL (381 aa). Residues Asn-82, Asn-102, Asn-143, Asn-184, Asn-221, Asn-249, and Asn-267 are each glycosylated (N-linked (GlcNAc...) asparagine). Positions 199–256 form a coiled coil; the sequence is VKFQENTLKGQEEISKLKERVHNASAEIMSMKEEQVHLEQEIKREVKVLNNITNDLRL. Residues 267–347 are disordered; the sequence is NITLIQGPPG…KGEKGSGSIL (81 aa). In terms of domain architecture, Collagen-like spans 273-344; it reads GPPGPPGEKG…KGQKGEKGSG (72 aa). Positions 353 to 453 constitute an SRCR domain; sequence VRLVGGRGPH…HGEDAGVTCT (101 aa). 3 cysteine pairs are disulfide-bonded: Cys-378/Cys-442, Cys-391/Cys-452, and Cys-422/Cys-432.

In terms of assembly, homotrimer. Interacts with MYO18A.

The protein resides in the membrane. In terms of biological role, membrane glycoproteins implicated in the pathologic deposition of cholesterol in arterial walls during atherogenesis. Two types of receptor subunits exist. These receptors mediate the endocytosis of a diverse group of macromolecules, including modified low density lipoproteins (LDL). In Oryctolagus cuniculus (Rabbit), this protein is Macrophage scavenger receptor types I and II (MSR1).